A 58-amino-acid polypeptide reads, in one-letter code: Ribosome modulation factor (58 aa).

It belongs to the ribosome modulation factor family.

The protein localises to the cytoplasm. Functionally, during stationary phase, converts 70S ribosomes to an inactive dimeric form (100S ribosomes). The polypeptide is Ribosome modulation factor (Shewanella amazonensis (strain ATCC BAA-1098 / SB2B)).